The sequence spans 124 residues: Colorectal cancer-associated protein 1 (124 aa).

Residues 77-97 (LYGCFCVGLVSGMAISVLLLA) form a helical membrane-spanning segment.

Expressed in gastrointestinal and immune tissue, as well as prostate, testis and ovary. Expressed in lamina propria and eosinophils but not in epithelial cells. Expression is greater in benign adjacent tissues than in colon tumors.

Its subcellular location is the membrane. The protein is Colorectal cancer-associated protein 1 (COLCA1) of Homo sapiens (Human).